Consider the following 512-residue polypeptide: Hyaluronidase PH-20 (512 aa).

Positions 1–35 are cleaved as a signal peptide; that stretch reads MGELRFKHLFWGSFVESGGTFQTVLIFLLIPCSLT. N-linked (GlcNAc...) asparagine glycosylation is present at Asn-46. 2 disulfides stabilise this stretch: Cys-60/Cys-351 and Cys-223/Cys-237. The active-site Proton donor is Glu-147. The N-linked (GlcNAc...) asparagine glycan is linked to Asn-165. 2 N-linked (GlcNAc...) asparagine glycosylation sites follow: Asn-293 and Asn-368. Cystine bridges form between Cys-376–Cys-387, Cys-381–Cys-435, and Cys-437–Cys-464.

This sequence belongs to the glycosyl hydrolase 56 family.

It localises to the cell membrane. The enzyme catalyses Random hydrolysis of (1-&gt;4)-linkages between N-acetyl-beta-D-glucosamine and D-glucuronate residues in hyaluronate.. Functionally, involved in sperm-egg adhesion. Upon fertilization sperm must first penetrate a layer of cumulus cells that surrounds the egg before reaching the zona pellucida. The cumulus cells are embedded in a matrix containing hyaluronic acid which is formed prior to ovulation. This protein aids in penetrating the layer of cumulus cells by digesting hyaluronic acid. The sequence is that of Hyaluronidase PH-20 (Spam1) from Mus musculus (Mouse).